A 123-amino-acid polypeptide reads, in one-letter code: MELNMLKSKIHRVTVTQAELSYVGSITIDKALMKAANILEYEKVQIVDIDNGARFETYVIPGEENSKVICLNGAAARCVQVGDKVIIMCYCSMDEQEAKDYKPIVVFANEDNTINKISNYERN.

The active-site Schiff-base intermediate with substrate; via pyruvic acid is the serine 25. Serine 25 bears the Pyruvic acid (Ser) mark. Threonine 57 lines the substrate pocket. Catalysis depends on tyrosine 58, which acts as the Proton donor. 73-75 (GAA) serves as a coordination point for substrate.

The protein belongs to the PanD family. In terms of assembly, heterooctamer of four alpha and four beta subunits. Pyruvate serves as cofactor. Post-translationally, is synthesized initially as an inactive proenzyme, which is activated by self-cleavage at a specific serine bond to produce a beta-subunit with a hydroxyl group at its C-terminus and an alpha-subunit with a pyruvoyl group at its N-terminus.

Its subcellular location is the cytoplasm. It carries out the reaction L-aspartate + H(+) = beta-alanine + CO2. The protein operates within cofactor biosynthesis; (R)-pantothenate biosynthesis; beta-alanine from L-aspartate: step 1/1. Catalyzes the pyruvoyl-dependent decarboxylation of aspartate to produce beta-alanine. The chain is Aspartate 1-decarboxylase from Clostridium novyi (strain NT).